The sequence spans 889 residues: DNA-directed RNA polymerase subunit Rpo1N (889 aa).

Residues C62, C65, C72, H75, C102, C105, C149, and C152 each contribute to the Zn(2+) site. Positions 466, 468, and 470 each coordinate Mg(2+).

This sequence belongs to the RNA polymerase beta' chain family. In terms of assembly, part of the RNA polymerase complex. It depends on Mg(2+) as a cofactor. The cofactor is Zn(2+).

The protein resides in the cytoplasm. It catalyses the reaction RNA(n) + a ribonucleoside 5'-triphosphate = RNA(n+1) + diphosphate. In terms of biological role, DNA-dependent RNA polymerase (RNAP) catalyzes the transcription of DNA into RNA using the four ribonucleoside triphosphates as substrates. Forms the clamp head domain. The protein is DNA-directed RNA polymerase subunit Rpo1N of Methanococcus vannielii (strain ATCC 35089 / DSM 1224 / JCM 13029 / OCM 148 / SB).